Consider the following 373-residue polypeptide: Secondary metabolism regulator laeA (373 aa).

Residues 55–81 are disordered; it reads ERDPAAGRWHANGSPSINSTSSKNPDR. Over residues 67–77 the composition is skewed to polar residues; it reads GSPSINSTSSK.

The protein belongs to the methyltransferase superfamily. LaeA methyltransferase family. As to quaternary structure, component of the heterotrimeric velvet complex composed of laeA, veA and velB; VeA acting as a bridging protein between laeA and velB.

Its subcellular location is the nucleus. The catalysed reaction is L-methionyl-[protein] + S-adenosyl-L-methionine = S-methyl-L-methionyl-[protein] + S-adenosyl-L-homocysteine. Its function is as follows. Methyltransferase that performs automethylation. No other methyl-accepting substrate has been identified yet. Component of the velvet transcription factor complex that acts as a global regulator for secondary metabolite gene expression. Positively controls expression of 20% to 40% of major classes of secondary metabolite biosynthesis genes such as nonribosomal peptide synthetases, polyketide synthases, and P450 monooxygenases. Controls the expression of the gliotoxin gene cluster. Controls the expression of the fumitremorgin, fumagillin, and pseurotin gene clusters, where genes for fumagillin and pseurotin are physically intertwined in a single supercluster. Regulates the biosynthetic genes required for endocrocin production. Secondary metabolites under the transcriptional regulation of laeA are necessary for inhibition of angiogenesis during invasive infection in mice. Controls the expression of cell surface rodA, a hydrophobin that acts as an antiphagocytic molecule. Also regulates the expression of genes involved in conidial biosynthesis. The polypeptide is Secondary metabolism regulator laeA (Aspergillus fumigatus (strain ATCC MYA-4609 / CBS 101355 / FGSC A1100 / Af293) (Neosartorya fumigata)).